The chain runs to 733 residues: ATP-dependent RNA helicase MAK5 (733 aa).

A disordered region spans residues 53 to 132; it reads EAQVKEEEES…HEDEKETPED (80 aa). Positions 58 to 99 are enriched in acidic residues; that stretch reads EEEESSESDFPDFDAMEQEDDGDVEEAEEEEEEEEDVAEADE. The segment covering 100 to 126 has biased composition (basic and acidic residues); that stretch reads PEVKQKQEQARVEQIDKGVDSEKHEDE. Residues 155–183 carry the Q motif motif; that stretch reads GWTDTVDLSMTTINGLSNLGFTEMTPIQK. Residues 186 to 376 form the Helicase ATP-binding domain; it reads IPAALEGKDI…ANSSWKKKNN (191 aa). Residue 199–206 participates in ATP binding; that stretch reads ASTGSGKT. The DEAD box signature appears at 315–318; the sequence is DEAD. The 167-residue stretch at 428-594 folds into the Helicase C-terminal domain; that stretch reads DLYCYYFVTL…TVPLLPIEID (167 aa).

It belongs to the DEAD box helicase family. DDX24/MAK5 subfamily.

The protein localises to the nucleus. Its subcellular location is the nucleolus. It catalyses the reaction ATP + H2O = ADP + phosphate + H(+). ATP-binding RNA helicase involved in the biogenesis of 60S ribosomal subunits and is required for the normal formation of 25S and 5.8S rRNAs. In Candida glabrata (strain ATCC 2001 / BCRC 20586 / JCM 3761 / NBRC 0622 / NRRL Y-65 / CBS 138) (Yeast), this protein is ATP-dependent RNA helicase MAK5 (MAK5).